The sequence spans 65 residues: Protein translocase subunit SecE (65 aa).

At 1–27 the chain is on the cytoplasmic side; the sequence is MEKLKEFLKGVRDELKRVVWPSRELVV. Residues 28–59 traverse the membrane as a helical segment; the sequence is KATISVIIFSLAIGVYLWILDLTFTKIISFIL. Topologically, residues 60–65 are periplasmic; the sequence is SLRGSL.

The protein belongs to the SecE/SEC61-gamma family. In terms of assembly, component of the Sec protein translocase complex. Heterotrimer consisting of SecY, SecE and SecG subunits. The heterotrimers can form oligomers, although 1 heterotrimer is thought to be able to translocate proteins. Interacts with SecDF, and other proteins may be involved. The channel interacts with SecA via subunit SecY.

The protein resides in the cell inner membrane. Functionally, essential subunit of the protein translocation channel SecYEG. Clamps together the 2 halves of SecY. May contact the channel plug during translocation. The polypeptide is Protein translocase subunit SecE (Aquifex aeolicus (strain VF5)).